A 518-amino-acid chain; its full sequence is Type II methyltransferase M.HindII (518 aa).

Belongs to the N(4)/N(6)-methyltransferase family.

The catalysed reaction is a 2'-deoxyadenosine in DNA + S-adenosyl-L-methionine = an N(6)-methyl-2'-deoxyadenosine in DNA + S-adenosyl-L-homocysteine + H(+). In terms of biological role, a gamma subtype methylase, recognizes the double-stranded sequence 5'-GTYRAC-3', methylates A-5 on both strands, and protects the DNA from cleavage by the HindII endonuclease. This chain is Type II methyltransferase M.HindII (hindIIM), found in Haemophilus influenzae (strain ATCC 51907 / DSM 11121 / KW20 / Rd).